Consider the following 116-residue polypeptide: NADH dehydrogenase [ubiquinone] 1 alpha subcomplex subunit 5 (116 aa).

A2 bears the N-acetylalanine mark. An N6-acetyllysine mark is found at K30, K36, K46, and K60. Phosphoserine is present on S89. Position 98 is an N6-acetyllysine; alternate (K98). Residue K98 is modified to N6-succinyllysine; alternate.

It belongs to the complex I NDUFA5 subunit family. In terms of assembly, complex I is composed of 45 different subunits. Acetylation of Lys-98 is observed in liver mitochondria from fasted mice but not from fed mice.

It localises to the mitochondrion inner membrane. Functionally, accessory subunit of the mitochondrial membrane respiratory chain NADH dehydrogenase (Complex I), that is believed not to be involved in catalysis. Complex I functions in the transfer of electrons from NADH to the respiratory chain. The immediate electron acceptor for the enzyme is believed to be ubiquinone. In Mus musculus (Mouse), this protein is NADH dehydrogenase [ubiquinone] 1 alpha subcomplex subunit 5 (Ndufa5).